A 306-amino-acid polypeptide reads, in one-letter code: Methionyl-tRNA formyltransferase (306 aa).

110–113 (SLLP) contributes to the (6S)-5,6,7,8-tetrahydrofolate binding site.

The protein belongs to the Fmt family.

It catalyses the reaction L-methionyl-tRNA(fMet) + (6R)-10-formyltetrahydrofolate = N-formyl-L-methionyl-tRNA(fMet) + (6S)-5,6,7,8-tetrahydrofolate + H(+). Functionally, attaches a formyl group to the free amino group of methionyl-tRNA(fMet). The formyl group appears to play a dual role in the initiator identity of N-formylmethionyl-tRNA by promoting its recognition by IF2 and preventing the misappropriation of this tRNA by the elongation apparatus. This is Methionyl-tRNA formyltransferase from Brucella suis (strain ATCC 23445 / NCTC 10510).